A 487-amino-acid chain; its full sequence is Keratin, type I cytoskeletal 12 (487 aa).

Residues 1–118 (MSLSVCTSAL…GNDGGLLSGS (118 aa)) form a head region. Positions 119–154 (EKETMQNLNDRLASYLGKVRSLEEANAELENKIREW) are coil 1A. In terms of domain architecture, IF rod spans 119-433 (EKETMQNLND…RLLEGDSQGD (315 aa)). The tract at residues 158–175 (RRTRDAGSQSDYSKYYPL) is linker 1. Residues 176–267 (IEDLKNKIVS…KNHEEELQSF (92 aa)) form a coil 1B region. The tract at residues 268–290 (QAGGPGEVNVEMDAAPGVDLTKV) is linker 12. Positions 291 to 428 (LNEMRAQYEA…IETYRRLLEG (138 aa)) are coil 2. The segment at 428-461 (GDSQGDGFDESSSLSVSKPQTPSVDSSKDPNKTR) is disordered. A tail region spans residues 429 to 487 (DSQGDGFDESSSLSVSKPQTPSVDSSKDPNKTRKIKTVVQEIVNGEVVSSQVQELEEEM). The span at 437 to 452 (ESSSLSVSKPQTPSVD) shows a compositional bias: polar residues.

This sequence belongs to the intermediate filament family. Heterotetramer of two type I and two type II keratins. Keratin-3 associates with keratin-12. In terms of tissue distribution, expressed in the corneal epithelium (at protein level). Also expressed in the suprabasal limbal epithelium of the cornea (at protein level).

Involved in corneal epithelium organization, integrity and corneal keratin expression. This Mus musculus (Mouse) protein is Keratin, type I cytoskeletal 12 (Krt12).